A 119-amino-acid chain; its full sequence is Ribonuclease P protein component (119 aa).

Belongs to the RnpA family. Consists of a catalytic RNA component (M1 or rnpB) and a protein subunit.

It catalyses the reaction Endonucleolytic cleavage of RNA, removing 5'-extranucleotides from tRNA precursor.. RNaseP catalyzes the removal of the 5'-leader sequence from pre-tRNA to produce the mature 5'-terminus. It can also cleave other RNA substrates such as 4.5S RNA. The protein component plays an auxiliary but essential role in vivo by binding to the 5'-leader sequence and broadening the substrate specificity of the ribozyme. This is Ribonuclease P protein component from Streptococcus pyogenes serotype M5 (strain Manfredo).